A 191-amino-acid polypeptide reads, in one-letter code: UPF0312 protein Shewana3_1179 (191 aa).

The signal sequence occupies residues 1–22; it reads MKKQLLAALIGGSLLAPMAASA.

Belongs to the UPF0312 family. Type 1 subfamily.

It localises to the periplasm. The chain is UPF0312 protein Shewana3_1179 from Shewanella sp. (strain ANA-3).